A 135-amino-acid polypeptide reads, in one-letter code: MILVVTLACLIAVVCCQCPTTDQGQISKVFKAYDIDGNNKISRVEGTMVFRDADLNRDGALDNNEFSSEWAFYHNDYYSPFFNVADRNHNGRIEFVEGNQGFDHFDKNRDNEISSWEFTQTWMETVRPSSRPIDF.

A signal peptide spans 1 to 16; the sequence is MILVVTLACLIAVVCC. 2 EF-hand domains span residues 21 to 56 and 93 to 128; these read TDQGQISKVFKAYDIDGNNKISRVEGTMVFRDADLN and IEFVEGNQGFDHFDKNRDNEISSWEFTQTWMETVRP. Residues D34, D36, N38, K40, E45, D106, N108, D110, E112, and E117 each coordinate Ca(2+).

In terms of tissue distribution, component of the acid-insoluble organic matrix of the calcified shell.

It localises to the secreted. The polypeptide is Insoluble matrix shell protein 5 (Ruditapes philippinarum (Japanese carpet shell)).